We begin with the raw amino-acid sequence, 463 residues long: Ribulose bisphosphate carboxylase (463 aa).

Residue asparagine 116 coordinates substrate. Lysine 171 (proton acceptor) is an active-site residue. Lysine 173 is a binding site for substrate. Lysine 196, aspartate 198, and glutamate 199 together coordinate Mg(2+). Lysine 196 bears the N6-carboxylysine mark. The active-site Proton acceptor is histidine 294. The substrate site is built by arginine 295, histidine 328, and serine 375.

It belongs to the RuBisCO large chain family. Type II subfamily. Homodimer. Mg(2+) is required as a cofactor.

It carries out the reaction 2 (2R)-3-phosphoglycerate + 2 H(+) = D-ribulose 1,5-bisphosphate + CO2 + H2O. The catalysed reaction is D-ribulose 1,5-bisphosphate + O2 = 2-phosphoglycolate + (2R)-3-phosphoglycerate + 2 H(+). Functionally, ruBisCO catalyzes two reactions: the carboxylation of D-ribulose 1,5-bisphosphate, the primary event in carbon dioxide fixation, as well as the oxidative fragmentation of the pentose substrate. Both reactions occur simultaneously and in competition at the same active site. This chain is Ribulose bisphosphate carboxylase, found in Hydrogenovibrio marinus.